We begin with the raw amino-acid sequence, 449 residues long: Glutamyl-tRNA reductase (449 aa).

Residues 58 to 61 (TCNR), Ser-121, 126 to 128 (ETQ), and Gln-132 each bind substrate. The Nucleophile role is filled by Cys-59. 203–208 (GLGEMA) provides a ligand contact to NADP(+).

It belongs to the glutamyl-tRNA reductase family. As to quaternary structure, homodimer.

The enzyme catalyses (S)-4-amino-5-oxopentanoate + tRNA(Glu) + NADP(+) = L-glutamyl-tRNA(Glu) + NADPH + H(+). Its pathway is porphyrin-containing compound metabolism; protoporphyrin-IX biosynthesis; 5-aminolevulinate from L-glutamyl-tRNA(Glu): step 1/2. Functionally, catalyzes the NADPH-dependent reduction of glutamyl-tRNA(Glu) to glutamate 1-semialdehyde (GSA). The chain is Glutamyl-tRNA reductase from Helicobacter pylori (strain P12).